The chain runs to 450 residues: Signal recognition particle 54 kDa protein (450 aa).

GTP-binding positions include 107–114 (GIQGSGKT), 188–192 (DTAGR), and 247–250 (TKLD).

Belongs to the GTP-binding SRP family. SRP54 subfamily. As to quaternary structure, part of the signal recognition particle protein translocation system, which is composed of SRP and FtsY. Archaeal SRP consists of a 7S RNA molecule of 300 nucleotides and two protein subunits: SRP54 and SRP19.

It is found in the cytoplasm. The catalysed reaction is GTP + H2O = GDP + phosphate + H(+). Functionally, involved in targeting and insertion of nascent membrane proteins into the cytoplasmic membrane. Binds to the hydrophobic signal sequence of the ribosome-nascent chain (RNC) as it emerges from the ribosomes. The SRP-RNC complex is then targeted to the cytoplasmic membrane where it interacts with the SRP receptor FtsY. In Methanococcus maripaludis (strain C6 / ATCC BAA-1332), this protein is Signal recognition particle 54 kDa protein.